The sequence spans 416 residues: 3-phosphoshikimate 1-carboxyvinyltransferase (416 aa).

Residues Lys20, Ser21, and Arg25 each coordinate 3-phosphoshikimate. Residue Lys20 participates in phosphoenolpyruvate binding. Residues Gly88 and Arg116 each contribute to the phosphoenolpyruvate site. Ser159, Ser160, Gln161, Ser186, Asp300, and Lys327 together coordinate 3-phosphoshikimate. Gln161 lines the phosphoenolpyruvate pocket. Asp300 acts as the Proton acceptor in catalysis. Phosphoenolpyruvate-binding residues include Arg331 and Arg373.

It belongs to the EPSP synthase family. In terms of assembly, monomer.

Its subcellular location is the cytoplasm. The enzyme catalyses 3-phosphoshikimate + phosphoenolpyruvate = 5-O-(1-carboxyvinyl)-3-phosphoshikimate + phosphate. The protein operates within metabolic intermediate biosynthesis; chorismate biosynthesis. Catalyzes the transfer of the enolpyruvyl moiety of phosphoenolpyruvate (PEP) to the 5-hydroxyl of shikimate-3-phosphate (S3P) to produce enolpyruvyl shikimate-3-phosphate and inorganic phosphate. This is 3-phosphoshikimate 1-carboxyvinyltransferase from Archaeoglobus fulgidus (strain ATCC 49558 / DSM 4304 / JCM 9628 / NBRC 100126 / VC-16).